Reading from the N-terminus, the 430-residue chain is UDP-N-acetylglucosamine 1-carboxyvinyltransferase (430 aa).

Phosphoenolpyruvate is bound at residue 22-23; it reads KN. Arginine 102 serves as a coordination point for UDP-N-acetyl-alpha-D-glucosamine. The Proton donor role is filled by cysteine 126. Cysteine 126 bears the 2-(S-cysteinyl)pyruvic acid O-phosphothioketal mark. Residues 131–135, 172–175, aspartate 317, and isoleucine 339 contribute to the UDP-N-acetyl-alpha-D-glucosamine site; these read RPVDL and KVSV.

Belongs to the EPSP synthase family. MurA subfamily.

It localises to the cytoplasm. It catalyses the reaction phosphoenolpyruvate + UDP-N-acetyl-alpha-D-glucosamine = UDP-N-acetyl-3-O-(1-carboxyvinyl)-alpha-D-glucosamine + phosphate. It functions in the pathway cell wall biogenesis; peptidoglycan biosynthesis. Functionally, cell wall formation. Adds enolpyruvyl to UDP-N-acetylglucosamine. This is UDP-N-acetylglucosamine 1-carboxyvinyltransferase from Rhizobium etli (strain ATCC 51251 / DSM 11541 / JCM 21823 / NBRC 15573 / CFN 42).